The sequence spans 403 residues: Phosphoglycerate kinase (403 aa).

Residues 21–23, Arg-36, 59–62, Arg-119, and Arg-159 contribute to the substrate site; these read DFN and HLGR. Residues Lys-214, Gly-301, Glu-332, and 359–362 contribute to the ATP site; that span reads GGDS.

It belongs to the phosphoglycerate kinase family. In terms of assembly, monomer.

The protein resides in the cytoplasm. The enzyme catalyses (2R)-3-phosphoglycerate + ATP = (2R)-3-phospho-glyceroyl phosphate + ADP. Its pathway is carbohydrate degradation; glycolysis; pyruvate from D-glyceraldehyde 3-phosphate: step 2/5. This chain is Phosphoglycerate kinase, found in Lactobacillus helveticus (strain DPC 4571).